A 300-amino-acid polypeptide reads, in one-letter code: F-box associated domain-containing protein sdz-33 (300 aa).

Positions 5–51 constitute an F-box domain; sequence PFPILCLPDFVLQKSLKLMGVVEHLCLSILSKNIKQLIATLKGYPKC.

Expressed in D-type motor neuron cell bodies.

Substrate recognition component of E3 ubiquitin-protein ligase complex which mediates the ubiquitination and subsequent proteasomal degradation of target proteins such as mdl-1. Positively regulates axon regeneration by targeting mdl-1 for ubiquitin-mediated degradation; probably thereby reducing levels of mdl-1-mxl-1 heterodimers, allowing free mxl-1 to form complexes with tdpt-1 and thus inhibiting tdpt-1-dependent sumoylation of ets-4. This Caenorhabditis elegans protein is F-box associated domain-containing protein sdz-33.